The sequence spans 322 residues: ATP-dependent 6-phosphofructokinase (322 aa).

ATP-binding positions include G12, 73–74 (RF), and 103–106 (GDGT). A Mg(2+)-binding site is contributed by D104. 126–128 (TID) is a binding site for substrate. Catalysis depends on D128, which acts as the Proton acceptor. ADP is bound at residue R155. Substrate contacts are provided by residues R163 and 170-172 (MGR). ADP-binding positions include 186–188 (GSE), K212, and 214–216 (KPS). Substrate-binding positions include E223, R245, and 251–254 (HTQR).

Belongs to the phosphofructokinase type A (PFKA) family. ATP-dependent PFK group I subfamily. Prokaryotic clade 'B1' sub-subfamily. As to quaternary structure, homotetramer. Mg(2+) is required as a cofactor.

Its subcellular location is the cytoplasm. It catalyses the reaction beta-D-fructose 6-phosphate + ATP = beta-D-fructose 1,6-bisphosphate + ADP + H(+). It functions in the pathway carbohydrate degradation; glycolysis; D-glyceraldehyde 3-phosphate and glycerone phosphate from D-glucose: step 3/4. Allosterically activated by ADP and other diphosphonucleosides, and allosterically inhibited by phosphoenolpyruvate. Catalyzes the phosphorylation of D-fructose 6-phosphate to fructose 1,6-bisphosphate by ATP, the first committing step of glycolysis. In Mesomycoplasma hyopneumoniae (strain 7448) (Mycoplasma hyopneumoniae), this protein is ATP-dependent 6-phosphofructokinase.